A 115-amino-acid polypeptide reads, in one-letter code: Meiotically up-regulated gene 106 protein (115 aa).

Residues 1 to 34 form the signal peptide; that stretch reads MSIKVEWIKFTRLKKCATLLVQLSLLRYRYMVLA. 2 helical membrane-spanning segments follow: residues 41 to 60 and 81 to 103; these read CIVV…GALF and GVKL…FTPY.

The protein resides in the membrane. Its function is as follows. Has a role in meiosis. The chain is Meiotically up-regulated gene 106 protein (mug106) from Schizosaccharomyces pombe (strain 972 / ATCC 24843) (Fission yeast).